Reading from the N-terminus, the 131-residue chain is Large ribosomal subunit protein bL12c (131 aa).

Residues 106 to 125 (KDNTNKENSEEIKQQLEEAG) are compositionally biased toward basic and acidic residues. The tract at residues 106-131 (KDNTNKENSEEIKQQLEEAGAKVSIK) is disordered.

This sequence belongs to the bacterial ribosomal protein bL12 family. As to quaternary structure, homodimer. Part of the ribosomal stalk of the 50S ribosomal subunit. Forms a multimeric L10(L12)X complex, where L10 forms an elongated spine to which 2 to 4 L12 dimers bind in a sequential fashion. Binds GTP-bound translation factors.

It is found in the plastid. The protein resides in the chloroplast. Functionally, forms part of the ribosomal stalk which helps the ribosome interact with GTP-bound translation factors. Is thus essential for accurate translation. The polypeptide is Large ribosomal subunit protein bL12c (Gracilaria tenuistipitata var. liui (Red alga)).